The chain runs to 754 residues: 5-methyltetrahydropteroyltriglutamate--homocysteine methyltransferase (754 aa).

Residues 17–20 (RELK) and Lys117 contribute to the 5-methyltetrahydropteroyltri-L-glutamate site. L-homocysteine contacts are provided by residues 431–433 (IGS) and Glu484. Residues 431-433 (IGS) and Glu484 each bind L-methionine. Residues 515-516 (RC) and Trp561 contribute to the 5-methyltetrahydropteroyltri-L-glutamate site. An L-homocysteine-binding site is contributed by Asp599. An L-methionine-binding site is contributed by Asp599. 5-methyltetrahydropteroyltri-L-glutamate is bound at residue Glu605. Positions 641, 643, and 665 each coordinate Zn(2+). His694 serves as the catalytic Proton donor. Cys726 contacts Zn(2+).

Belongs to the vitamin-B12 independent methionine synthase family. Zn(2+) is required as a cofactor.

It carries out the reaction 5-methyltetrahydropteroyltri-L-glutamate + L-homocysteine = tetrahydropteroyltri-L-glutamate + L-methionine. Its pathway is amino-acid biosynthesis; L-methionine biosynthesis via de novo pathway; L-methionine from L-homocysteine (MetE route): step 1/1. Functionally, catalyzes the transfer of a methyl group from 5-methyltetrahydrofolate to homocysteine resulting in methionine formation. The chain is 5-methyltetrahydropteroyltriglutamate--homocysteine methyltransferase from Salmonella typhi.